The following is a 139-amino-acid chain: MLIPRRVKHRKQHHPKRRGMAKGGTQVAFGEYGIQALTPAYVTNRQIEAARIAMTRHIKRGGKVWINIYPDRPLTKKPAETRMGSGKGSPEWWIANVHPGRVMFELSYPNEKIAREALTRAAHKLPMKCRIVKREAGEA.

Over residues 1 to 20 (MLIPRRVKHRKQHHPKRRGM) the composition is skewed to basic residues. A disordered region spans residues 1 to 22 (MLIPRRVKHRKQHHPKRRGMAK).

Belongs to the universal ribosomal protein uL16 family. As to quaternary structure, part of the 50S ribosomal subunit.

Binds 23S rRNA and is also seen to make contacts with the A and possibly P site tRNAs. The chain is Large ribosomal subunit protein uL16 from Streptomyces coelicolor (strain ATCC BAA-471 / A3(2) / M145).